Consider the following 207-residue polypeptide: High frequency lysogenization protein HflD homolog (207 aa).

It belongs to the HflD family.

It localises to the cytoplasm. The protein resides in the cell inner membrane. This is High frequency lysogenization protein HflD homolog from Tolumonas auensis (strain DSM 9187 / NBRC 110442 / TA 4).